The following is a 469-amino-acid chain: Cytochrome P450 85A1 (469 aa).

The chain crosses the membrane as a helical span at residues 1–21; it reads MVLVAIGVVVAAAVVVSSLLL. Cys419 provides a ligand contact to heme.

The protein belongs to the cytochrome P450 family. The cofactor is heme. In terms of tissue distribution, expressed at low levels in all the tissues, but preferentially in the leaf sheath.

Its subcellular location is the membrane. The enzyme catalyses 6-deoxoteasterone + reduced [NADPH--hemoprotein reductase] + O2 = 6alpha-hydroxyteasterone + oxidized [NADPH--hemoprotein reductase] + H2O + H(+). It catalyses the reaction 6alpha-hydroxytyphasterol + reduced [NADPH--hemoprotein reductase] + O2 = teasterone + oxidized [NADPH--hemoprotein reductase] + 2 H2O + H(+). It carries out the reaction 3-dehydro-6-deoxoteasterone + reduced [NADPH--hemoprotein reductase] + O2 = 3-dehydro-6alpha-hydroxyteasterone + oxidized [NADPH--hemoprotein reductase] + H2O + H(+). The catalysed reaction is 3-dehydro-6alpha-hydroxyteasterone + reduced [NADPH--hemoprotein reductase] + O2 = 3-dehydroteasterone + oxidized [NADPH--hemoprotein reductase] + 2 H2O + H(+). The enzyme catalyses 6-deoxotyphasterol + reduced [NADPH--hemoprotein reductase] + O2 = 6alpha-hydroxytyphasterol + oxidized [NADPH--hemoprotein reductase] + H2O + H(+). It catalyses the reaction 6alpha-hydroxytyphasterol + reduced [NADPH--hemoprotein reductase] + O2 = typhasterol + oxidized [NADPH--hemoprotein reductase] + 2 H2O + H(+). It carries out the reaction 3-dehydro-6-deoxoteasterone + 2 reduced [NADPH--hemoprotein reductase] + 2 O2 = 3-dehydroteasterone + 2 oxidized [NADPH--hemoprotein reductase] + 3 H2O + 2 H(+). The catalysed reaction is 6-deoxoteasterone + 2 reduced [NADPH--hemoprotein reductase] + 2 O2 = teasterone + 2 oxidized [NADPH--hemoprotein reductase] + 3 H2O + 2 H(+). The enzyme catalyses 6-deoxotyphasterol + 2 reduced [NADPH--hemoprotein reductase] + 2 O2 = typhasterol + 2 oxidized [NADPH--hemoprotein reductase] + 3 H2O + 2 H(+). The protein operates within plant hormone biosynthesis; brassinosteroid biosynthesis. In terms of biological role, catalyzes the C6-oxidation step in brassinosteroids biosynthesis. May convert 6-deoxoteasterone (6-deoxoTE) to teasterone (TE), 3-dehydro-6-deoxoteasterone (6-deoxo3DT, 6-deoxo3DHT) to 3-dehydroteasterone (3DT, 3-DHT), and 6-deoxotyphasterol (6-deoxoTY) to typhasterol (TY). Involved in the organization and elongation of the leaf and stem cells. Not able to convert 6-deoxocastasterone (6-deoxoCS) and castasterone (CS) to brassinolide (BL). In Oryza sativa subsp. japonica (Rice), this protein is Cytochrome P450 85A1.